The chain runs to 491 residues: Ligand-gated ion channel 50 (491 aa).

An N-terminal signal peptide occupies residues 1–19 (MRFLLVLQLVFFYFSAATT). 2 N-linked (GlcNAc...) asparagine glycosylation sites follow: Asn55 and Asn101. A disulfide bridge links Cys157 with Cys171. Transmembrane regions (helical) follow at residues 241 to 261 (LFQSYFPTSLTVISSWVGFFF), 265 to 287 (SVSARITLGVSSLLALTFQFGNV), and 302 to 322 (VWMIFSVIFIFCTLVELAIVC). Asn418 is a glycosylation site (N-linked (GlcNAc...) asparagine). Residues 465–485 (MIMFPLSFLIFNVVYWSIYFM) form a helical membrane-spanning segment.

The protein belongs to the ligand-gated ion channel (TC 1.A.9) family.

The protein localises to the postsynaptic cell membrane. The protein resides in the cell membrane. In Caenorhabditis elegans, this protein is Ligand-gated ion channel 50 (lgc-50).